Here is a 289-residue protein sequence, read N- to C-terminus: Bis(5'-nucleosyl)-tetraphosphatase, symmetrical (289 aa).

It belongs to the Ap4A hydrolase family.

It carries out the reaction P(1),P(4)-bis(5'-adenosyl) tetraphosphate + H2O = 2 ADP + 2 H(+). Hydrolyzes diadenosine 5',5'''-P1,P4-tetraphosphate to yield ADP. The polypeptide is Bis(5'-nucleosyl)-tetraphosphatase, symmetrical (Yersinia pseudotuberculosis serotype O:1b (strain IP 31758)).